The sequence spans 330 residues: NmrA-like family domain-containing oxidoreductase notO (330 aa).

NADP(+) is bound by residues 12-17, 38-42, 59-60, 80-82, and 160-163; these read VGIGSL, HHFAQ, RS, IEA, and LGGG. The helical transmembrane segment at 12 to 32 threads the bilayer; the sequence is VGIGSLPAGLVALFMGATSGI. An interaction with ASS1 region spans residues 158 to 202; the sequence is SVLGGGLESPLNEQDLDLRDPKNWTFWSSSMHSGTMGTLTLERIA. N-linked (GlcNAc...) asparagine glycosylation is found at Asn-180 and Asn-207.

Belongs to the NmrA-type oxidoreductase family.

The protein resides in the membrane. NmrA-like family domain-containing oxidoreductase; part of the gene cluster that mediates the biosynthesis of notoamide, a fungal indole alkaloid that belongs to a family of natural products containing a characteristic bicyclo[2.2.2]diazaoctane core. The first step of notoamide biosynthesis involves coupling of L-proline and L-tryptophan by the bimodular NRPS notE, to produce cyclo-L-tryptophan-L-proline called brevianamide F. The reverse prenyltransferase notF then acts as a deoxybrevianamide E synthase and converts brevianamide F to deoxybrevianamide E via reverse prenylation at C-2 of the indole ring leading to the bicyclo[2.2.2]diazaoctane core. Deoxybrevianamide E is further hydroxylated at C-6 of the indole ring, likely catalyzed by the cytochrome P450 monooxygenase notG, to yield 6-hydroxy-deoxybrevianamide E. 6-hydroxy-deoxybrevianamide E is a specific substrate of the prenyltransferase notC for normal prenylation at C-7 to produce 6-hydroxy-7-prenyl-deoxybrevianamide, also called notoamide S. As the proposed pivotal branching point in notoamide biosynthesis, notoamide S can be diverted to notoamide E through an oxidative pyran ring closure putatively catalyzed by either notH cytochrome P450 monooxygenase or the notD FAD-linked oxidoreductase. This step would be followed by an indole 2,3-epoxidation-initiated pinacol-like rearrangement catalyzed by the notB FAD-dependent monooxygenase leading to the formation of notoamide C and notoamide D. On the other hand notoamide S is converted to notoamide T by notH (or notD), a bifunctional oxidase that also functions as the intramolecular Diels-Alderase responsible for generation of (+)-notoamide T. To generate antipodal (-)-notoaminide T, notH' (or notD') in Aspergillus versicolor is expected to catalyze a Diels-Alder reaction leading to the opposite stereochemistry. The remaining oxidoreductase notD (or notH) likely catalyzes the oxidative pyran ring formation to yield (+)-stephacidin A. The FAD-dependent monooxygenase notI is highly similar to notB and is predicted to catalyze a similar conversion from (+)-stephacidin A to (-)-notoamide B via the 2,3-epoxidation of (+)-stephacidin A followed by a pinacol-type rearrangement. Finally, it remains unclear which enzyme could be responsible for the final hydroxylation steps leading to notoamide A and sclerotiamide. The function of notO in the notoamide biosynthesis has not been determined yet. The protein is NmrA-like family domain-containing oxidoreductase notO of Aspergillus sp. (strain MF297-2).